The sequence spans 696 residues: DNA ligase (696 aa).

NAD(+)-binding positions include 36-40 (DAEYD), 85-86 (SL), and E123. The active-site N6-AMP-lysine intermediate is the K125. NAD(+) contacts are provided by R146, E181, K319, and K343. C437, C440, C455, and C461 together coordinate Zn(2+). One can recognise a BRCT domain in the interval 618-696 (PEGTSLAGKT…EDGLKALLGL (79 aa)).

It belongs to the NAD-dependent DNA ligase family. LigA subfamily. Mg(2+) serves as cofactor. Requires Mn(2+) as cofactor.

The enzyme catalyses NAD(+) + (deoxyribonucleotide)n-3'-hydroxyl + 5'-phospho-(deoxyribonucleotide)m = (deoxyribonucleotide)n+m + AMP + beta-nicotinamide D-nucleotide.. In terms of biological role, DNA ligase that catalyzes the formation of phosphodiester linkages between 5'-phosphoryl and 3'-hydroxyl groups in double-stranded DNA using NAD as a coenzyme and as the energy source for the reaction. It is essential for DNA replication and repair of damaged DNA. This chain is DNA ligase, found in Bordetella bronchiseptica (strain ATCC BAA-588 / NCTC 13252 / RB50) (Alcaligenes bronchisepticus).